The following is a 783-amino-acid chain: Protein phosphatase 2C 29 (783 aa).

The segment at 151–194 is disordered; the sequence is SFSALPLQPGPDRSGLFMSGPIERGATSGPLDPPAGEISRSNSA. At S199 the chain carries Phosphoserine. A PPM-type phosphatase domain is found at 260 to 770; that stretch reads SSGENDLQWA…DDCTVLVIAL (511 aa). Mn(2+)-binding residues include D295 and G296. Residues 555 to 595 are disordered; it reads ETGESVETAERVEERRNDLDRDDGNKEPLVVDSSDSTVNNE. Positions 562–580 are enriched in basic and acidic residues; sequence TAERVEERRNDLDRDDGNK. Mn(2+)-binding residues include D701 and D761.

Belongs to the PP2C family. It depends on Mg(2+) as a cofactor. Mn(2+) is required as a cofactor. In terms of tissue distribution, expressed in roots, leaves, stems, inflorescences, flowers and developing vascular tissue.

The protein localises to the nucleus. The catalysed reaction is O-phospho-L-seryl-[protein] + H2O = L-seryl-[protein] + phosphate. The enzyme catalyses O-phospho-L-threonyl-[protein] + H2O = L-threonyl-[protein] + phosphate. Involved in the regulation of pedicel length and of CLAVATA pathways controlling stem cell identity at shoot and flower meristems. The protein is Protein phosphatase 2C 29 (PLL1) of Arabidopsis thaliana (Mouse-ear cress).